The sequence spans 434 residues: Cytochrome c biogenesis protein CcsB (434 aa).

3 helical membrane passes run 15–35 (LRVA…GTAI), 73–93 (SNWF…CSLR), and 163–183 (VGPL…VVGA).

This sequence belongs to the Ccs1/CcsB family. As to quaternary structure, may interact with CcsA.

The protein resides in the cellular thylakoid membrane. Its function is as follows. Required during biogenesis of c-type cytochromes (cytochrome c6 and cytochrome f) at the step of heme attachment. This chain is Cytochrome c biogenesis protein CcsB, found in Synechococcus sp. (strain RCC307).